Here is a 51-residue protein sequence, read N- to C-terminus: Large ribosomal subunit protein eL39 (51 aa).

The protein belongs to the eukaryotic ribosomal protein eL39 family.

In Methanobrevibacter smithii (strain ATCC 35061 / DSM 861 / OCM 144 / PS), this protein is Large ribosomal subunit protein eL39.